The following is a 703-amino-acid chain: Cyclic AMP-dependent transcription factor ATF-6 beta (703 aa).

An N-acetylalanine modification is found at Ala2. Residues Ala2–Gln86 are transcription activation. The Cytoplasmic segment spans residues Ala2–Lys396. 3 disordered regions span residues Val87–Glu114, Leu229–Pro248, and Glu293–Cys317. The span at Ser89–Glu114 shows a compositional bias: low complexity. A bZIP domain is found at Leu325–Leu388. A basic motif region spans residues Lys327–Lys347. A leucine-zipper region spans residues Leu350–Leu357. A helical; Signal-anchor for type II membrane protein membrane pass occupies residues Val397 to Ser417. Over Glu418–Pro703 the chain is Lumenal. Positions Pro447–Ala479 are disordered. N-linked (GlcNAc...) asparagine glycosylation is found at Asn476 and Asn505. Positions Gln521–Val565 are disordered. Positions Arg522–Pro531 are enriched in basic residues. 3 N-linked (GlcNAc...) asparagine glycosylation sites follow: Asn610, Asn627, and Asn676. Over residues Ser660–Asn676 the composition is skewed to polar residues. The tract at residues Ser660–Pro703 is disordered. Low complexity predominate over residues Ser685–Gln696.

Belongs to the bZIP family. ATF subfamily. In terms of assembly, homodimer and heterodimer with ATF6-alpha. The dimer interacts with the nuclear transcription factor Y (NF-Y) trimer through direct binding to NF-Y subunit C (NF-YC). Post-translationally, N-glycosylated. In terms of processing, during unfolded protein response, a fragment of approximately 60 kDa containing the cytoplasmic transcription factor domain is released by proteolysis. The cleavage is probably performed sequentially by site-1 (MBTPS1, S1P) and site-2 (MBTPS2, S2P) proteases. Ubiquitous.

Its subcellular location is the endoplasmic reticulum membrane. It localises to the nucleus. Precursor of the transcription factor form (Processed cyclic AMP-dependent transcription factor ATF-6 beta), which is embedded in the endoplasmic reticulum membrane. Endoplasmic reticulum stress promotes processing of this form, releasing the transcription factor form that translocates into the nucleus, where it activates transcription of genes involved in the unfolded protein response (UPR). In terms of biological role, transcription factor that acts in the unfolded protein response (UPR) pathway by activating UPR target genes induced during ER stress. Binds DNA on the 5'-CCAC[GA]-3' half of the ER stress response element (ERSE) (5'-CCAATN(9)CCAC[GA]-3') when NF-Y is bound to ERSE. The sequence is that of Cyclic AMP-dependent transcription factor ATF-6 beta (ATF6B) from Homo sapiens (Human).